The following is a 57-amino-acid chain: Protein translocase subunit SecE (57 aa).

The chain crosses the membrane as a helical span at residues 33–53 (GLGILLVGFIGFVIFSIMTFV).

It belongs to the SecE/SEC61-gamma family. Component of the Sec protein translocase complex. Heterotrimer consisting of SecY (alpha), SecG (beta) and SecE (gamma) subunits. The heterotrimers can form oligomers, although 1 heterotrimer is thought to be able to translocate proteins. Interacts with the ribosome. May interact with SecDF, and other proteins may be involved.

It is found in the cell membrane. In terms of biological role, essential subunit of the Sec protein translocation channel SecYEG. Clamps together the 2 halves of SecY. May contact the channel plug during translocation. The chain is Protein translocase subunit SecE from Natronomonas pharaonis (strain ATCC 35678 / DSM 2160 / CIP 103997 / JCM 8858 / NBRC 14720 / NCIMB 2260 / Gabara) (Halobacterium pharaonis).